A 913-amino-acid polypeptide reads, in one-letter code: ER degradation-enhancing alpha-mannosidase-like protein 3 (913 aa).

An N-terminal signal peptide occupies residues 1 to 15; that stretch reads MGCPAVEARRWGDMW. The N-linked (GlcNAc...) asparagine glycan is linked to Asn104. The Proton donor role is filled by Glu132. Asn181 carries an N-linked (GlcNAc...) asparagine glycan. The active site involves Asp279. Glu373 acts as the Proton donor in catalysis. Glu391 is an active-site residue. Residue Thr477 coordinates Ca(2+). Residue Asn497 is glycosylated (N-linked (GlcNAc...) asparagine). A PA domain is found at 660 to 766; that stretch reads LSKHLAGAQG…KEGNIILDAI (107 aa). Residue Asn797 is glycosylated (N-linked (GlcNAc...) asparagine). The tract at residues 823–895 is disordered; it reads EESPVSQPEV…NKVQPMESIL (73 aa). The segment covering 826–839 has biased composition (low complexity); it reads PVSQPEVPSSDSPS. Positions 843–866 are enriched in basic and acidic residues; that stretch reads RTSERDITPESQEHKTEETEHSPK. The Prevents secretion from ER signature appears at 910-913; sequence KDEL.

This sequence belongs to the glycosyl hydrolase 47 family. Ca(2+) is required as a cofactor.

It is found in the endoplasmic reticulum lumen. It carries out the reaction N(4)-(alpha-D-Man-(1-&gt;2)-alpha-D-Man-(1-&gt;2)-alpha-D-Man-(1-&gt;3)-[alpha-D-Man-(1-&gt;2)-alpha-D-Man-(1-&gt;3)-[alpha-D-Man-(1-&gt;2)-alpha-D-Man-(1-&gt;6)]-alpha-D-Man-(1-&gt;6)]-beta-D-Man-(1-&gt;4)-beta-D-GlcNAc-(1-&gt;4)-beta-D-GlcNAc)-L-asparaginyl-[protein] (N-glucan mannose isomer 9A1,2,3B1,2,3) + 4 H2O = N(4)-(alpha-D-Man-(1-&gt;3)-[alpha-D-Man-(1-&gt;3)-[alpha-D-Man-(1-&gt;6)]-alpha-D-Man-(1-&gt;6)]-beta-D-Man-(1-&gt;4)-beta-D-GlcNAc-(1-&gt;4)-beta-D-GlcNAc)-L-asparaginyl-[protein] (N-glucan mannose isomer 5A1,2) + 4 beta-D-mannose. It catalyses the reaction N(4)-(alpha-D-Man-(1-&gt;2)-alpha-D-Man-(1-&gt;2)-alpha-D-Man-(1-&gt;3)-[alpha-D-Man-(1-&gt;3)-[alpha-D-Man-(1-&gt;2)-alpha-D-Man-(1-&gt;6)]-alpha-D-Man-(1-&gt;6)]-beta-D-Man-(1-&gt;4)-beta-D-GlcNAc-(1-&gt;4)-beta-D-GlcNAc)-L-asparaginyl-[protein] (N-glucan mannose isomer 8A1,2,3B1,3) + 3 H2O = N(4)-(alpha-D-Man-(1-&gt;3)-[alpha-D-Man-(1-&gt;3)-[alpha-D-Man-(1-&gt;6)]-alpha-D-Man-(1-&gt;6)]-beta-D-Man-(1-&gt;4)-beta-D-GlcNAc-(1-&gt;4)-beta-D-GlcNAc)-L-asparaginyl-[protein] (N-glucan mannose isomer 5A1,2) + 3 beta-D-mannose. It participates in protein modification; protein glycosylation. In terms of biological role, may be involved in endoplasmic reticulum-associated degradation (ERAD). The sequence is that of ER degradation-enhancing alpha-mannosidase-like protein 3 (edem3) from Xenopus laevis (African clawed frog).